The sequence spans 377 residues: MQCARSSAGDCHSCGWLSLAYSEQINQKQHNLLDLLPKNYAFTQLAPVESQQVKFRNKAKMVVSGSVEKPILGLRKPEGEGVDLCQCPLYPASFEPVFPILKTFIAKAGLVPYNVERRRGELKFILLTESRHNHSMMLRFVLRSEKKLAQLRQALPWLQAQLPQLAVISVNIQPVHMAILEGEQEIVLTEKTFLDEYFNEIPLHIRPKGFFQTNPDVAASLYATAGHWVKELQINRLWDLFCGSGGFGLHCAQKNTELTGIEISPEAIECARLSANELGLEHVEFQALDSTGFALAKESVPELVLVNPPRRGIGETLCDYLNSMKPRFILYSSCNAQTMAKDIQQLSHYRIDRVQLFDMFPHTAHYEVLTLLVLQQS.

Cys3, Cys11, Cys14, and Cys87 together coordinate [4Fe-4S] cluster. S-adenosyl-L-methionine-binding residues include Gln212, Phe241, Glu262, and Asn307. The active-site Nucleophile is the Cys334.

The protein belongs to the class I-like SAM-binding methyltransferase superfamily. RNA M5U methyltransferase family. RlmC subfamily.

The catalysed reaction is uridine(747) in 23S rRNA + S-adenosyl-L-methionine = 5-methyluridine(747) in 23S rRNA + S-adenosyl-L-homocysteine + H(+). Catalyzes the formation of 5-methyl-uridine at position 747 (m5U747) in 23S rRNA. The polypeptide is 23S rRNA (uracil(747)-C(5))-methyltransferase RlmC (Proteus mirabilis (strain HI4320)).